The chain runs to 101 residues: Apolipoprotein C-II (101 aa).

The N-terminal stretch at 1–22 (MGTRFLLALCLVLLVLGFEVQG) is a signal peptide. The propeptide at 23–28 (AQLPQQ) is removed in mature form. The segment at 66–74 (AVDEKLRDL) is lipid binding. The lipoprotein lipase cofactor stretch occupies residues 78 to 101 (STAAMSTYTGIFTDQVLSVLKGEE).

Belongs to the apolipoprotein C2 family. Proapolipoprotein C-II is synthesized as a sialic acid containing glycoprotein which is subsequently desialylated prior to its proteolytic processing. Post-translationally, proapolipoprotein C-II, the major form found in plasma undergoes proteolytic cleavage of its N-terminal hexapeptide to generate apolipoprotein C-II, which occurs as the minor form in plasma.

It is found in the secreted. Functionally, component of chylomicrons, very low-density lipoproteins (VLDL), low-density lipoproteins (LDL), and high-density lipoproteins (HDL) in plasma. Plays an important role in lipoprotein metabolism as an activator of lipoprotein lipase. Both proapolipoprotein C-II and apolipoprotein C-II can activate lipoprotein lipase. This is Apolipoprotein C-II (APOC2) from Papio anubis (Olive baboon).